The following is a 153-amino-acid chain: D-aminoacyl-tRNA deacylase (153 aa).

The short motif at 142–143 (GP) is the Gly-cisPro motif, important for rejection of L-amino acids element.

This sequence belongs to the DTD family. Homodimer.

It localises to the cytoplasm. The enzyme catalyses glycyl-tRNA(Ala) + H2O = tRNA(Ala) + glycine + H(+). The catalysed reaction is a D-aminoacyl-tRNA + H2O = a tRNA + a D-alpha-amino acid + H(+). Functionally, an aminoacyl-tRNA editing enzyme that deacylates mischarged D-aminoacyl-tRNAs. Also deacylates mischarged glycyl-tRNA(Ala), protecting cells against glycine mischarging by AlaRS. Acts via tRNA-based rather than protein-based catalysis; rejects L-amino acids rather than detecting D-amino acids in the active site. By recycling D-aminoacyl-tRNA to D-amino acids and free tRNA molecules, this enzyme counteracts the toxicity associated with the formation of D-aminoacyl-tRNA entities in vivo and helps enforce protein L-homochirality. The protein is D-aminoacyl-tRNA deacylase of Cupriavidus necator (strain ATCC 17699 / DSM 428 / KCTC 22496 / NCIMB 10442 / H16 / Stanier 337) (Ralstonia eutropha).